Here is a 252-residue protein sequence, read N- to C-terminus: Ubiquinone biosynthesis O-methyltransferase (252 aa).

The S-adenosyl-L-methionine site is built by R36, G60, D81, and L123.

Belongs to the methyltransferase superfamily. UbiG/COQ3 family.

The enzyme catalyses a 3-demethylubiquinol + S-adenosyl-L-methionine = a ubiquinol + S-adenosyl-L-homocysteine + H(+). The catalysed reaction is a 3-(all-trans-polyprenyl)benzene-1,2-diol + S-adenosyl-L-methionine = a 2-methoxy-6-(all-trans-polyprenyl)phenol + S-adenosyl-L-homocysteine + H(+). The protein operates within cofactor biosynthesis; ubiquinone biosynthesis. In terms of biological role, O-methyltransferase that catalyzes the 2 O-methylation steps in the ubiquinone biosynthetic pathway. The protein is Ubiquinone biosynthesis O-methyltransferase of Rickettsia prowazekii (strain Madrid E).